The primary structure comprises 96 residues: Co-chaperonin GroES (96 aa).

This sequence belongs to the GroES chaperonin family. In terms of assembly, heptamer of 7 subunits arranged in a ring. Interacts with the chaperonin GroEL.

It is found in the cytoplasm. Together with the chaperonin GroEL, plays an essential role in assisting protein folding. The GroEL-GroES system forms a nano-cage that allows encapsulation of the non-native substrate proteins and provides a physical environment optimized to promote and accelerate protein folding. GroES binds to the apical surface of the GroEL ring, thereby capping the opening of the GroEL channel. The polypeptide is Co-chaperonin GroES (Actinobacillus pleuropneumoniae serotype 5b (strain L20)).